We begin with the raw amino-acid sequence, 282 residues long: Protease HtpX homolog (282 aa).

Helical transmembrane passes span 6-26 (TFILMTFLALIFMFFGGLIGG) and 28-48 (QGVIIAFVVALGMNFFSYFFS). Position 130 (histidine 130) interacts with Zn(2+). Residue glutamate 131 is part of the active site. Histidine 134 contacts Zn(2+). The next 2 helical transmembrane spans lie at 140 to 160 (ILIGSVAAVFAGAIAILANFA) and 177 to 197 (ILMIVAAIIMPIAAAIIQMAI). Glutamate 202 provides a ligand contact to Zn(2+).

This sequence belongs to the peptidase M48B family. The cofactor is Zn(2+).

Its subcellular location is the cell inner membrane. The sequence is that of Protease HtpX homolog from Campylobacter hominis (strain ATCC BAA-381 / DSM 21671 / CCUG 45161 / LMG 19568 / NCTC 13146 / CH001A).